Reading from the N-terminus, the 186-residue chain is Tumor necrosis factor alpha-induced protein 8-like protein 1 (186 aa).

The stretch at 37–70 (EVLDELYRVTKEYTRNRKEAQKIIKNLIKMVVKL) forms a coiled coil.

Belongs to the TNFAIP8 family.

The protein resides in the cytoplasm. This chain is Tumor necrosis factor alpha-induced protein 8-like protein 1 (tnfaip8l1), found in Danio rerio (Zebrafish).